A 578-amino-acid chain; its full sequence is XK-related protein 6 (578 aa).

7 helical membrane passes run 86-106, 114-134, 253-273, 307-327, 348-368, 377-397, and 410-430; these read WIVL…WLAV, FLWS…VQIL, WLQC…LASY, VLSL…FVVL, WEEV…WFNV, MVAY…LWYA, and LALC…VLYY.

The protein belongs to the XK family.

Its subcellular location is the cell membrane. This is XK-related protein 6 (xkr6) from Tetraodon nigroviridis (Spotted green pufferfish).